The following is a 193-amino-acid chain: Recombination protein RecR (193 aa).

A C4-type zinc finger spans residues 61–76; that stretch reads CSSCNALSESEVCEIC. Residues 84–170 form the Toprim domain; the sequence is SQLCMVLHPR…TFTKIAQGVP (87 aa).

This sequence belongs to the RecR family.

Its function is as follows. May play a role in DNA repair. It seems to be involved in an RecBC-independent recombinational process of DNA repair. It may act with RecF and RecO. In Helicobacter pylori (strain P12), this protein is Recombination protein RecR.